The primary structure comprises 275 residues: Large ribosomal subunit protein uL2 (275 aa).

Over residues 35 to 49 the composition is skewed to polar residues; sequence DSQSSTAGRNNNGRI. Disordered regions lie at residues 35–59 and 224–275; these read DSQSSTAGRNNNGRITTRHKGGGHK and AMNP…RHKR. The span at 50–59 shows a compositional bias: basic residues; that stretch reads TTRHKGGGHK.

Belongs to the universal ribosomal protein uL2 family. In terms of assembly, part of the 50S ribosomal subunit. Forms a bridge to the 30S subunit in the 70S ribosome.

One of the primary rRNA binding proteins. Required for association of the 30S and 50S subunits to form the 70S ribosome, for tRNA binding and peptide bond formation. It has been suggested to have peptidyltransferase activity; this is somewhat controversial. Makes several contacts with the 16S rRNA in the 70S ribosome. The polypeptide is Large ribosomal subunit protein uL2 (Burkholderia cenocepacia (strain HI2424)).